A 35-amino-acid chain; its full sequence is Peptide ToHyp2 (35 aa).

A compositionally biased stretch (pro residues) spans 1–29 (LPKPPLLPPPVPGLAPGLPPLPVPDPVPH). The interval 1–35 (LPKPPLLPPPVPGLAPGLPPLPVPDPVPHPPKKPP) is disordered. A hydroxyproline mark is found at P5, P9, P10, P12, P16, P20, P31, and P35.

O-glycosylated; contains pentose side chains at some or all of the hydroxyproline residues. Glycosylation is required for full antifungal activity.

In terms of biological role, antimicrobial peptide. Inhibits elongation of hyphae in B.sorokiniana (IC(50)=3.8 uM) but has no effect on this process or on germination of conidia in a panel of other phytopathogenic fungi. At concentrations above 10 uM, has antibacterial activity. The polypeptide is Peptide ToHyp2 (Taraxacum officinale (Common dandelion)).